The primary structure comprises 560 residues: DNA ligase B (560 aa).

The active-site N6-AMP-lysine intermediate is the Lys-124.

This sequence belongs to the NAD-dependent DNA ligase family. LigB subfamily.

The enzyme catalyses NAD(+) + (deoxyribonucleotide)n-3'-hydroxyl + 5'-phospho-(deoxyribonucleotide)m = (deoxyribonucleotide)n+m + AMP + beta-nicotinamide D-nucleotide.. Catalyzes the formation of phosphodiester linkages between 5'-phosphoryl and 3'-hydroxyl groups in double-stranded DNA using NAD as a coenzyme and as the energy source for the reaction. The chain is DNA ligase B from Escherichia coli O6:K15:H31 (strain 536 / UPEC).